Reading from the N-terminus, the 168-residue chain is CASP-like protein UU-1 (168 aa).

At 1–17 the chain is on the cytoplasmic side; that stretch reads MVELESQEAVTVASTAD. Residues 18–38 traverse the membrane as a helical segment; it reads IAVDVSLRLLAAATSLAAAVV. Topologically, residues 39-54 are extracellular; the sequence is VAANHQQRWGIRVDFT. The chain crosses the membrane as a helical span at residues 55–75; it reads LFQVWIGFVAVNLVCTVYAAA. The Cytoplasmic portion of the chain corresponds to 76–95; the sequence is TAAAAARKAMGRWWLHHADA. Residues 96-116 traverse the membrane as a helical segment; the sequence is VVVNLEAAATAGAGAIGSIAM. At 117–136 the chain is on the extracellular side; that stretch reads WGNEASGWYAVCRLYRRYCN. A helical transmembrane segment spans residues 137-157; the sequence is AGAAALALSLAAVLLLGVACA. At 158 to 168 the chain is on the cytoplasmic side; sequence RSRYPKMPPTT.

It belongs to the Casparian strip membrane proteins (CASP) family. Homodimer and heterodimers.

The protein resides in the cell membrane. This Oryza sativa subsp. japonica (Rice) protein is CASP-like protein UU-1.